The sequence spans 262 residues: MGANIRYSNDYALSLASKNGHIKVVKYLVSKDANVTHDNNYAVRYASENGHFEVVKYLVDQGADIRDCRDYAVRFASENGHLEVVKYLVDKGANIRALDDYAVCLASVNGYIEIVKYLVSQGANFRADNDYAVRFASENGYLEVVKFLVDQGADIRADDDYAIISASVYGHLEVIKFLMSQGADFRSKNNASIKLAIKYKHPEIIEYFLTQCTDVNTDIINIFYAYLTKLASKNKTAKLVEYMNIFCHIINKYDNCVKHLMP.

ANK repeat units lie at residues 8 to 37 (SNDYALSLASKNGHIKVVKYLVSKDANVTH), 38 to 67 (DNNYAVRYASENGHFEVVKYLVDQGADIRD), 68 to 97 (CRDYAVRFASENGHLEVVKYLVDKGANIRA), 99 to 127 (DDYAVCLASVNGYIEIVKYLVSQGANFRA), 128 to 157 (DNDYAVRFASENGYLEVVKFLVDQGADIRA), 159 to 187 (DDYAIISASVYGHLEVIKFLMSQGADFRS), and 189 to 217 (NNASIKLAIKYKHPEIIEYFLTQCTDVNT).

The sequence is that of Putative ankyrin repeat protein R848 from Acanthamoeba polyphaga (Amoeba).